The primary structure comprises 430 residues: Phosphomethylpyrimidine synthase (430 aa).

Substrate contacts are provided by residues asparagine 68, methionine 96, tyrosine 125, histidine 164, 186 to 188 (SRG), 227 to 230 (DALR), and glutamate 266. Histidine 270 contributes to the Zn(2+) binding site. Position 293 (tyrosine 293) interacts with substrate. Position 334 (histidine 334) interacts with Zn(2+). [4Fe-4S] cluster contacts are provided by cysteine 410, cysteine 413, and cysteine 417.

The protein belongs to the ThiC family. [4Fe-4S] cluster is required as a cofactor.

The enzyme catalyses 5-amino-1-(5-phospho-beta-D-ribosyl)imidazole + S-adenosyl-L-methionine = 4-amino-2-methyl-5-(phosphooxymethyl)pyrimidine + CO + 5'-deoxyadenosine + formate + L-methionine + 3 H(+). Its pathway is cofactor biosynthesis; thiamine diphosphate biosynthesis. Functionally, catalyzes the synthesis of the hydroxymethylpyrimidine phosphate (HMP-P) moiety of thiamine from aminoimidazole ribotide (AIR) in a radical S-adenosyl-L-methionine (SAM)-dependent reaction. This is Phosphomethylpyrimidine synthase from Pyrobaculum aerophilum (strain ATCC 51768 / DSM 7523 / JCM 9630 / CIP 104966 / NBRC 100827 / IM2).